A 137-amino-acid polypeptide reads, in one-letter code: DNA-binding protein H-NS (137 aa).

The DNA-binding element occupies 112 to 117; sequence QGRTPA.

Belongs to the histone-like protein H-NS family. In terms of assembly, homodimer that oligomerizes on DNA into higher-order complexes that form bridges between disparate regions of DNA compacting it. Interacts with Hha, YdgT and StpA.

The protein localises to the cytoplasm. It localises to the nucleoid. In terms of biological role, a DNA-binding protein implicated in transcriptional repression and chromosome organization and compaction. Binds nucleation sites in AT-rich DNA and bridges them, forming higher-order nucleoprotein complexes and condensing the chromosome. As many horizontally transferred genes are AT-rich, it plays a central role in silencing foreign genes. A subset of genes are repressed by H-NS in association with other proteins. This is DNA-binding protein H-NS (hns) from Salmonella paratyphi A (strain ATCC 9150 / SARB42).